A 133-amino-acid chain; its full sequence is Large-conductance mechanosensitive channel (133 aa).

2 consecutive transmembrane segments (helical) span residues 14-34 and 67-87; these read VIDLAVGVVIGAAFGKIVSSL and GNFIQTIFDFLIIAAAIFMFV.

This sequence belongs to the MscL family. As to quaternary structure, homopentamer.

The protein resides in the cell membrane. In terms of biological role, channel that opens in response to stretch forces in the membrane lipid bilayer. May participate in the regulation of osmotic pressure changes within the cell. The chain is Large-conductance mechanosensitive channel from Bacillus mycoides (strain KBAB4) (Bacillus weihenstephanensis).